Consider the following 343-residue polypeptide: Small ribosomal subunit biogenesis GTPase RsgA (343 aa).

The 160-residue stretch at 116–275 (RGQLKPVAAN…LIDSPGIREF (160 aa)) folds into the CP-type G domain. GTP contacts are provided by residues 163–166 (NKFD) and 217–225 (GQSGVGKSS). Cysteine 299, cysteine 304, histidine 306, and cysteine 312 together coordinate Zn(2+).

It belongs to the TRAFAC class YlqF/YawG GTPase family. RsgA subfamily. In terms of assembly, monomer. Associates with 30S ribosomal subunit, binds 16S rRNA. Requires Zn(2+) as cofactor.

The protein localises to the cytoplasm. In terms of biological role, one of several proteins that assist in the late maturation steps of the functional core of the 30S ribosomal subunit. Helps release RbfA from mature subunits. May play a role in the assembly of ribosomal proteins into the subunit. Circularly permuted GTPase that catalyzes slow GTP hydrolysis, GTPase activity is stimulated by the 30S ribosomal subunit. This chain is Small ribosomal subunit biogenesis GTPase RsgA, found in Pseudomonas fluorescens (strain SBW25).